The sequence spans 332 residues: 2,3-diketo-L-gulonate reductase (332 aa).

His-44 acts as the Proton donor in catalysis. NAD(+)-binding positions include 168–174 (ITMVDMS), 224–225 (WK), and 304–306 (GHE).

The protein belongs to the LDH2/MDH2 oxidoreductase family. DlgD subfamily. In terms of assembly, homodimer.

Its subcellular location is the cytoplasm. The enzyme catalyses 3-dehydro-L-gulonate + NAD(+) = 2,3-dioxo-L-gulonate + NADH + H(+). It catalyses the reaction 3-dehydro-L-gulonate + NADP(+) = 2,3-dioxo-L-gulonate + NADPH + H(+). Its function is as follows. Catalyzes the reduction of 2,3-diketo-L-gulonate in the presence of NADH, to form 3-keto-L-gulonate. The protein is 2,3-diketo-L-gulonate reductase of Salmonella paratyphi A (strain ATCC 9150 / SARB42).